A 286-amino-acid chain; its full sequence is Bifunctional protein FolD (286 aa).

NADP(+) contacts are provided by residues 165 to 167 and Ser-190; that span reads GRS.

The protein belongs to the tetrahydrofolate dehydrogenase/cyclohydrolase family. As to quaternary structure, homodimer.

The catalysed reaction is (6R)-5,10-methylene-5,6,7,8-tetrahydrofolate + NADP(+) = (6R)-5,10-methenyltetrahydrofolate + NADPH. It catalyses the reaction (6R)-5,10-methenyltetrahydrofolate + H2O = (6R)-10-formyltetrahydrofolate + H(+). It participates in one-carbon metabolism; tetrahydrofolate interconversion. Functionally, catalyzes the oxidation of 5,10-methylenetetrahydrofolate to 5,10-methenyltetrahydrofolate and then the hydrolysis of 5,10-methenyltetrahydrofolate to 10-formyltetrahydrofolate. This Staphylococcus aureus (strain MRSA252) protein is Bifunctional protein FolD.